Consider the following 258-residue polypeptide: Imidazole glycerol phosphate synthase subunit HisF (258 aa).

Residues Asp11 and Asp130 contribute to the active site.

The protein belongs to the HisA/HisF family. Heterodimer of HisH and HisF.

It is found in the cytoplasm. The enzyme catalyses 5-[(5-phospho-1-deoxy-D-ribulos-1-ylimino)methylamino]-1-(5-phospho-beta-D-ribosyl)imidazole-4-carboxamide + L-glutamine = D-erythro-1-(imidazol-4-yl)glycerol 3-phosphate + 5-amino-1-(5-phospho-beta-D-ribosyl)imidazole-4-carboxamide + L-glutamate + H(+). It participates in amino-acid biosynthesis; L-histidine biosynthesis; L-histidine from 5-phospho-alpha-D-ribose 1-diphosphate: step 5/9. IGPS catalyzes the conversion of PRFAR and glutamine to IGP, AICAR and glutamate. The HisF subunit catalyzes the cyclization activity that produces IGP and AICAR from PRFAR using the ammonia provided by the HisH subunit. The protein is Imidazole glycerol phosphate synthase subunit HisF of Bradyrhizobium sp. (strain BTAi1 / ATCC BAA-1182).